We begin with the raw amino-acid sequence, 461 residues long: tRNA modification GTPase MnmE (461 aa).

Residues R27, E89, and R128 each coordinate (6S)-5-formyl-5,6,7,8-tetrahydrofolate. The region spanning 224–382 (GLKTAIVGRP…LEALIKKLFF (159 aa)) is the TrmE-type G domain. N234 lines the K(+) pocket. GTP contacts are provided by residues 234-239 (NVGKSS), 253-259 (TDVAGTT), and 278-281 (DTAG). S238 is a Mg(2+) binding site. K(+) contacts are provided by T253, V255, and T258. T259 provides a ligand contact to Mg(2+). K461 contacts (6S)-5-formyl-5,6,7,8-tetrahydrofolate.

Belongs to the TRAFAC class TrmE-Era-EngA-EngB-Septin-like GTPase superfamily. TrmE GTPase family. As to quaternary structure, homodimer. Heterotetramer of two MnmE and two MnmG subunits. It depends on K(+) as a cofactor.

It localises to the cytoplasm. Exhibits a very high intrinsic GTPase hydrolysis rate. Involved in the addition of a carboxymethylaminomethyl (cmnm) group at the wobble position (U34) of certain tRNAs, forming tRNA-cmnm(5)s(2)U34. The sequence is that of tRNA modification GTPase MnmE from Lactobacillus delbrueckii subsp. bulgaricus (strain ATCC BAA-365 / Lb-18).